The primary structure comprises 70 residues: Conotoxin ArMKLT2-0112 (70 aa).

Residues 1-22 (MKLTCVLIIAVLFLTACQLTTG) form the signal peptide. A propeptide spanning residues 23 to 40 (EQKDHALRSTDKNSKLTR) is cleaved from the precursor. Pyrrolidone carboxylic acid is present on Gln41. Cystine bridges form between Cys42–Cys56, Cys49–Cys60, and Cys55–Cys67.

The protein belongs to the conotoxin O1 superfamily. In terms of tissue distribution, expressed by the venom duct.

The protein localises to the secreted. The protein is Conotoxin ArMKLT2-0112 of Conus arenatus (Sand-dusted cone).